The following is a 622-amino-acid chain: Probable potassium transport system protein Kup (622 aa).

12 helical membrane passes run 7–27 (LAIGAIGIVFGDIGTSPLYAF), 44–64 (VLGVVSLIFWSMTLIVAIQYV), 95–115 (GWLVVLLGVFATSLFYGDSMI), 133–153 (PELQGFVIPIALVLLVGLFVL), 165–185 (FAPVMIVYFTVIATLGLISIV), 199–219 (AVLFFINDGFLAFLALGSVVL), 243–263 (WFGFVMPCLLLNYFGQGAMIV), 290–310 (LVILATFATFIASQAVISGAF), 338–358 (IYIPVINWALMVAVILLVLTF), 370–390 (IAVTGAVTIDTLLMAVLLVGV), 395–415 (WYYAAPVVIVFLIIDGAYFAA), and 422–442 (DGGWFPLVVGLIVFTLLTTWA).

Belongs to the HAK/KUP transporter (TC 2.A.72) family.

The protein localises to the cell inner membrane. The catalysed reaction is K(+)(in) + H(+)(in) = K(+)(out) + H(+)(out). Transport of potassium into the cell. Likely operates as a K(+):H(+) symporter. The protein is Probable potassium transport system protein Kup of Erythrobacter litoralis (strain HTCC2594).